The chain runs to 488 residues: Stromelysin-3 (488 aa).

An N-terminal signal peptide occupies residues Met-1–Ala-31. The propeptide at Arg-32–Arg-97 is activation peptide. The interval Leu-41–Asn-93 is disordered. Low complexity predominate over residues Pro-50–Arg-79. The Cysteine switch signature appears at Pro-78 to Pro-85. Zn(2+) contacts are provided by Cys-80 and Asp-166. Asp-171, Gly-172, Gly-174, and Ile-176 together coordinate Ca(2+). Residues His-179, His-192, and His-215 each coordinate Zn(2+). The active site involves Glu-216. Residues His-219 and His-225 each coordinate Zn(2+). 4 Hemopexin repeats span residues Pro-291–Leu-339, Pro-340–Leu-382, Arg-384–Val-432, and Pro-433–Cys-480. Cys-294 and Cys-480 are joined by a disulfide.

It belongs to the peptidase M10A family. Requires Ca(2+) as cofactor. Zn(2+) serves as cofactor. In terms of processing, the precursor is cleaved by a furin endopeptidase. Specifically expressed in stromal cells of breast carcinomas.

Its subcellular location is the secreted. The protein resides in the extracellular space. It localises to the extracellular matrix. In terms of biological role, may play an important role in the progression of epithelial malignancies. This is Stromelysin-3 (MMP11) from Homo sapiens (Human).